Consider the following 80-residue polypeptide: UPF0291 protein LACR_1198 (80 aa).

The protein belongs to the UPF0291 family.

The protein resides in the cytoplasm. In Lactococcus lactis subsp. cremoris (strain SK11), this protein is UPF0291 protein LACR_1198.